The following is a 353-amino-acid chain: Photosystem II protein D1 (353 aa).

Residue Thr-2 is modified to N-acetylthreonine. Thr-2 carries the phosphothreonine modification. Transmembrane regions (helical) follow at residues 29 to 46 (YIGW…TATS), 118 to 133 (HFLL…EWEL), and 142 to 156 (WIAV…AATA). Residue His-118 coordinates chlorophyll a. Residue Tyr-126 participates in pheophytin a binding. Asp-170 and Glu-189 together coordinate [CaMn4O5] cluster. Residues 197 to 218 (FHMLGVAGVFGGSLFSAMHGSL) form a helical membrane-spanning segment. Residue His-198 coordinates chlorophyll a. Residues His-215 and 264 to 265 (SF) each bind a quinone. Residue His-215 coordinates Fe cation. Residue His-272 coordinates Fe cation. Residues 274-288 (FLAAWPVVGIWFTAL) form a helical membrane-spanning segment. Residues His-332, Glu-333, Asp-342, and Ala-344 each coordinate [CaMn4O5] cluster. The propeptide occupies 345-353 (AIEAPSTNG).

This sequence belongs to the reaction center PufL/M/PsbA/D family. PSII is composed of 1 copy each of membrane proteins PsbA, PsbB, PsbC, PsbD, PsbE, PsbF, PsbH, PsbI, PsbJ, PsbK, PsbL, PsbM, PsbT, PsbX, PsbY, PsbZ, Psb30/Ycf12, at least 3 peripheral proteins of the oxygen-evolving complex and a large number of cofactors. It forms dimeric complexes. The D1/D2 heterodimer binds P680, chlorophylls that are the primary electron donor of PSII, and subsequent electron acceptors. It shares a non-heme iron and each subunit binds pheophytin, quinone, additional chlorophylls, carotenoids and lipids. D1 provides most of the ligands for the Mn4-Ca-O5 cluster of the oxygen-evolving complex (OEC). There is also a Cl(-1) ion associated with D1 and D2, which is required for oxygen evolution. The PSII complex binds additional chlorophylls, carotenoids and specific lipids. serves as cofactor. In terms of processing, tyr-161 forms a radical intermediate that is referred to as redox-active TyrZ, YZ or Y-Z. Post-translationally, C-terminally processed by CTPA; processing is essential to allow assembly of the oxygen-evolving complex and thus photosynthetic growth.

Its subcellular location is the plastid. It is found in the chloroplast thylakoid membrane. The enzyme catalyses 2 a plastoquinone + 4 hnu + 2 H2O = 2 a plastoquinol + O2. Functionally, photosystem II (PSII) is a light-driven water:plastoquinone oxidoreductase that uses light energy to abstract electrons from H(2)O, generating O(2) and a proton gradient subsequently used for ATP formation. It consists of a core antenna complex that captures photons, and an electron transfer chain that converts photonic excitation into a charge separation. The D1/D2 (PsbA/PsbD) reaction center heterodimer binds P680, the primary electron donor of PSII as well as several subsequent electron acceptors. In Nicotiana debneyi (Debney's tobacco), this protein is Photosystem II protein D1.